Here is a 409-residue protein sequence, read N- to C-terminus: Elongation factor Tu (409 aa).

A tr-type G domain is found at 10–214 (KPHVNIGTIG…AVDSYIPTPE (205 aa)). Residues 19–26 (GHVDHGKT) form a G1 region. Residue 19-26 (GHVDHGKT) participates in GTP binding. T26 serves as a coordination point for Mg(2+). The segment at 60 to 64 (GITIN) is G2. Positions 81-84 (DCPG) are G3. GTP is bound by residues 81–85 (DCPGH) and 136–139 (NKVD). The interval 136-139 (NKVD) is G4. A G5 region spans residues 174-176 (SGL).

Belongs to the TRAFAC class translation factor GTPase superfamily. Classic translation factor GTPase family. EF-Tu/EF-1A subfamily. Monomer.

The protein localises to the cytoplasm. It catalyses the reaction GTP + H2O = GDP + phosphate + H(+). Its function is as follows. GTP hydrolase that promotes the GTP-dependent binding of aminoacyl-tRNA to the A-site of ribosomes during protein biosynthesis. This is Elongation factor Tu from Cyanothece sp. (strain PCC 7425 / ATCC 29141).